The sequence spans 305 residues: Cyclin-dependent kinase 3 (305 aa).

The region spanning 4–286 (FQKVEKIGEG…AKTALAHPYF (283 aa)) is the Protein kinase domain. ATP is bound by residues 10–18 (IGEGTYGVV) and lysine 33. Catalysis depends on aspartate 127, which acts as the Proton acceptor.

It belongs to the protein kinase superfamily. CMGC Ser/Thr protein kinase family. CDC2/CDKX subfamily. As to quaternary structure, interacts with CABLES1 and CABLES2. Interacts with ATF1. Binding to CCNC/cyclin-C promotes RB1 phosphorylation. As to expression, expressed in cancer cell lines and glioblastoma tissue.

It catalyses the reaction L-seryl-[protein] + ATP = O-phospho-L-seryl-[protein] + ADP + H(+). The enzyme catalyses L-threonyl-[protein] + ATP = O-phospho-L-threonyl-[protein] + ADP + H(+). Its function is as follows. Serine/threonine-protein kinase that plays a critical role in the control of the eukaryotic cell cycle; involved in G0-G1 and G1-S cell cycle transitions. Interacts with CCNC/cyclin-C during interphase. Phosphorylates histone H1, ATF1, RB1 and CABLES1. ATF1 phosphorylation triggers ATF1 transactivation and transcriptional activities, and promotes cell proliferation and transformation. CDK3/cyclin-C mediated RB1 phosphorylation is required for G0-G1 transition. Promotes G1-S transition probably by contributing to the activation of E2F1, E2F2 and E2F3 in a RB1-independent manner. The sequence is that of Cyclin-dependent kinase 3 (CDK3) from Homo sapiens (Human).